The following is a 210-amino-acid chain: Uracil phosphoribosyltransferase (210 aa).

5-phospho-alpha-D-ribose 1-diphosphate contacts are provided by residues arginine 78, arginine 103, and 130 to 138 (DPMLATGGT). Uracil contacts are provided by residues isoleucine 193 and 198 to 200 (GDA). Residue aspartate 199 participates in 5-phospho-alpha-D-ribose 1-diphosphate binding.

Belongs to the UPRTase family. Mg(2+) is required as a cofactor.

It carries out the reaction UMP + diphosphate = 5-phospho-alpha-D-ribose 1-diphosphate + uracil. Its pathway is pyrimidine metabolism; UMP biosynthesis via salvage pathway; UMP from uracil: step 1/1. Allosterically activated by GTP. Catalyzes the conversion of uracil and 5-phospho-alpha-D-ribose 1-diphosphate (PRPP) to UMP and diphosphate. This Stenotrophomonas maltophilia (strain K279a) protein is Uracil phosphoribosyltransferase.